Reading from the N-terminus, the 52-residue chain is Large ribosomal subunit protein bL33 (52 aa).

It belongs to the bacterial ribosomal protein bL33 family.

The polypeptide is Large ribosomal subunit protein bL33 (Campylobacter jejuni subsp. doylei (strain ATCC BAA-1458 / RM4099 / 269.97)).